A 432-amino-acid polypeptide reads, in one-letter code: Amino-acid acetyltransferase (432 aa).

The 140-residue stretch at 286 to 425 folds into the N-acetyltransferase domain; the sequence is EKLREATIED…ASLYNYQRQS (140 aa).

The protein belongs to the acetyltransferase family. ArgA subfamily.

It localises to the cytoplasm. It carries out the reaction L-glutamate + acetyl-CoA = N-acetyl-L-glutamate + CoA + H(+). It participates in amino-acid biosynthesis; L-arginine biosynthesis; N(2)-acetyl-L-ornithine from L-glutamate: step 1/4. The protein is Amino-acid acetyltransferase of Azotobacter vinelandii (strain DJ / ATCC BAA-1303).